Here is a 435-residue protein sequence, read N- to C-terminus: Matrix remodeling-associated protein 8 (435 aa).

Positions 1 to 22 (MEIRCKVLVCHIILLHSATVYL) are cleaved as a signal peptide. Residues 23–337 (YSVPASQQNP…QESRLHFFQQ (315 aa)) are Extracellular-facing. 2 Ig-like V-type domains span residues 32–158 (PESV…LNIT) and 156–293 (NITK…LSVS). Asn41, Asn120, Asn156, Asn245, and Asn324 each carry an N-linked (GlcNAc...) asparagine glycan. A disulfide bridge links Cys54 with Cys138. Cys187 and Cys273 are oxidised to a cystine. The chain crosses the membrane as a helical span at residues 338–358 (LGYILATLLLFILLLTAVILI). Topologically, residues 359-435 (TRKHQKRGYA…DLELRKEYCK (77 aa)) are cytoplasmic.

In terms of assembly, homodimer in cis. Does not appear to form trans-homodimers.

The protein localises to the cell membrane. In terms of biological role, transmembrane protein which can modulate activity of various signaling pathways, probably via binding to integrin ITGAV:ITGB3. Mediates heterophilic cell-cell interactions in vitro. The polypeptide is Matrix remodeling-associated protein 8 (mxra8) (Xenopus laevis (African clawed frog)).